Consider the following 923-residue polypeptide: Protocadherin gamma-B5 (923 aa).

The N-terminal stretch at 1–30 (MGSGAGELGRAERLPVLFLFLLSLFCPALC) is a signal peptide. Cadherin domains follow at residues 31 to 133 (EQIR…TPKF), 134 to 242 (TQNS…PPVF), 243 to 343 (NRDV…SPEV), 344 to 448 (TFHS…APVF), 449 to 558 (HQAS…APRV), and 566 to 671 (DGSA…LPDI). The Extracellular segment spans residues 31 to 687 (EQIRYRIPEE…SDPQAELQFY (657 aa)). Residues asparagine 415 and asparagine 541 are each glycosylated (N-linked (GlcNAc...) asparagine). The helical transmembrane segment at 688–708 (LVVALALISVLFLLAVILAVA) threads the bilayer. Over 709–923 (LRLRRSSSPA…KKKSGKKEKK (215 aa)) the chain is Cytoplasmic. 2 disordered regions span residues 794–832 (TSHP…WPNN) and 893–923 (ATLT…KEKK). Over residues 807-832 (WRFSQAQRPGTSGSQNGDDTGTWPNN) the composition is skewed to polar residues. Residues 913–923 (NKKKSGKKEKK) show a composition bias toward basic residues.

The protein resides in the cell membrane. Potential calcium-dependent cell-adhesion protein. May be involved in the establishment and maintenance of specific neuronal connections in the brain. This Homo sapiens (Human) protein is Protocadherin gamma-B5 (PCDHGB5).